The following is a 411-amino-acid chain: Serpin A3-3 (411 aa).

An N-terminal signal peptide occupies residues 1–24 (MRAERLSPLLALGLLVAGIRSVHC). N-linked (GlcNAc...) asparagine glycans are attached at residues N100, N180, N230, N264, and N318.

This sequence belongs to the serpin family. In terms of assembly, homodimer.

It is found in the cytoplasmic vesicle. The protein localises to the secretory vesicle. The protein resides in the chromaffin granule. It localises to the secreted. Serine protease inhibitor. Strongly inhibits elastase and trypsin stoichiometrically at the molar ratio of 1:1. Acts as a moderate inhibitor of plasmin and chymotrypsin. Does not inhibit thrombin, urokinase, kallikrein, tissue plasminogen activator, cathepsin G or the cysteine proteases papain, cathepsin B or cathepsin L. This Bos taurus (Bovine) protein is Serpin A3-3 (SERPINA3-3).